A 522-amino-acid chain; its full sequence is Glutathione reductase, mitochondrial (522 aa).

Residues 1–43 (MALLPRALSSGGRPSWRRAARASRGFPLPLPFPAAATHALSRA) constitute a mitochondrion transit peptide. 2 residues coordinate FAD: Ser74 and Gly75. Ser74 is a glutathione binding site. Residue Arg81 participates in glutathione binding. Residue Glu94 participates in FAD binding. Lys97 carries the post-translational modification N6-acetyllysine. FAD contacts are provided by Thr101, Cys102, and Lys110. Cys102 and Cys107 are oxidised to a cystine. Tyr158 contacts glutathione. Ala174 lines the FAD pocket. NADP(+)-binding residues include Ala239, Ile242, Glu245, Arg262, Arg268, and Gly334. Asp375 is an FAD binding site. Residue Leu381 participates in NADP(+) binding. FAD is bound at residue Thr383. Glutathione is bound at residue Arg391. Val414 contributes to the NADP(+) binding site. Position 511 (His511) interacts with FAD. Residue His511 is the Proton acceptor of the active site.

It belongs to the class-I pyridine nucleotide-disulfide oxidoreductase family. In terms of assembly, homodimer; disulfide-linked. It depends on FAD as a cofactor.

The protein resides in the mitochondrion. It is found in the cytoplasm. The catalysed reaction is 2 glutathione + NADP(+) = glutathione disulfide + NADPH + H(+). Catalyzes the reduction of glutathione disulfide (GSSG) to reduced glutathione (GSH). Constitutes the major mechanism to maintain a high GSH:GSSG ratio in the cytosol. This Callithrix jacchus (White-tufted-ear marmoset) protein is Glutathione reductase, mitochondrial (GSR).